A 508-amino-acid chain; its full sequence is Phosphoglycerate kinase A (508 aa).

Residues valine 32, aspartate 33, phenylalanine 34, asparagine 35, arginine 48, serine 70, histidine 71, glycine 73, arginine 74, arginine 224, histidine 260, and arginine 261 each contribute to the (2R)-3-phosphoglycerate site. ADP contacts are provided by glycine 306 and alanine 307. Residue glycine 306 coordinates CDP. Positions 307 and 308 each coordinate AMP. Alanine 307 serves as a coordination point for ATP. Alanine 307 serves as a coordination point for Mg(2+). Lysine 308 contributes to the (2R)-3-phosphoglycerate binding site. A CDP-binding site is contributed by glutamate 311. Glutamate 311 serves as a coordination point for Mg(2+). Residues lysine 312 and glycine 330 each coordinate ADP. Lysine 312 contacts AMP. Lysine 312 serves as a coordination point for ATP. A CDP-binding site is contributed by glycine 330. Residues alanine 331 and alanine 403 each contribute to the AMP site. ATP-binding residues include alanine 331 and alanine 403. Positions 403 and 427 each coordinate ADP. CDP is bound by residues glycine 428 and phenylalanine 433. Positions 433, 434, 466, and 467 each coordinate ADP. Glutamate 434 is an AMP binding site. The ATP site is built by glutamate 434, glutamate 466, and serine 467. Glutamate 466 contributes to the Mg(2+) binding site.

It belongs to the phosphoglycerate kinase family. Monomer. Requires Mg(2+) as cofactor.

The catalysed reaction is (2R)-3-phosphoglycerate + ATP = (2R)-3-phospho-glyceroyl phosphate + ADP. Its pathway is carbohydrate degradation; glycolysis; pyruvate from D-glyceraldehyde 3-phosphate: step 2/5. In Trypanosoma brucei brucei, this protein is Phosphoglycerate kinase A.